We begin with the raw amino-acid sequence, 348 residues long: Sesquiterpene synthase MGU_11447 (348 aa).

The Mg(2+) site is built by aspartate 91 and aspartate 96. Positions 91–96 match the DDXXXD motif motif; that stretch reads DDLFVD. Arginine 184 contacts substrate. Mg(2+) contacts are provided by asparagine 230, serine 234, and glutamate 238.

This sequence belongs to the terpene synthase family. Mg(2+) is required as a cofactor.

It carries out the reaction (2E,6E)-farnesyl diphosphate + H2O = (+)-corvol ether B + diphosphate. The catalysed reaction is (2E,6E)-farnesyl diphosphate + H2O = (+)-corvol ether A + diphosphate. In terms of biological role, terpene synthase that catalyzes the conversion of (2E,6E)-farnesyl diphosphate (FPP) into sesquiterpenes which are important for fungi-environment interactions. Produces a mixture consisting of 8 sesquiterpenes including corvol ethers A and B, as well as traces of epizonarene, gamma-cadinene, delta-cadinene, alpha-cadinene, alpha-cadinol, and an unidentified sesquiterpene. Produces both corvol ether A and corvol ether B in similar concentrations. The polypeptide is Sesquiterpene synthase MGU_11447 (Metarhizium guizhouense (strain ARSEF 977)).